Consider the following 627-residue polypeptide: DEAD-box ATP-dependent RNA helicase 35A (627 aa).

2 stretches are compositionally biased toward low complexity: residues 1–15 (MAAA…AAAA) and 52–61 (SSSAAEAASD). Disordered stretches follow at residues 1–23 (MAAA…EDNY) and 40–85 (LRRL…LEAS). Over residues 62-72 (LPPPPPPPPNQ) the composition is skewed to pro residues. The Q motif motif lies at 182–210 (RDFRDLRLPEPMLRKLREKGIVQPTPIQV). One can recognise a Helicase ATP-binding domain in the interval 213-397 (LPVVLSGRDM…KSALVKPVIV (185 aa)). 226–233 (AFTGSGKT) provides a ligand contact to ATP. The DEAD box signature appears at 345–348 (DEAD). Residues 408-568 (DVIQEVEYVK…RIPPVLAELN (161 aa)) enclose the Helicase C-terminal domain. Residues 584 to 601 (KGCAYCGGLGHRVTDCPK) form a CCHC-type zinc finger.

It belongs to the DEAD box helicase family. DDX41 subfamily.

It carries out the reaction ATP + H2O = ADP + phosphate + H(+). The sequence is that of DEAD-box ATP-dependent RNA helicase 35A from Oryza sativa subsp. japonica (Rice).